We begin with the raw amino-acid sequence, 518 residues long: Protease Do-like 4, mitochondrial (518 aa).

The N-terminal 23 residues, 1–23, are a transit peptide targeting the mitochondrion; the sequence is MLFRFLQTLARFCRFLLISVLGF. The interval 98–262 is serine protease; that stretch reads ESGGSGFVIS…IPTPVIKHFL (165 aa). Active-site charge relay system residues include His-116, Asp-147, and Ser-225. The 81-residue stretch at 278–358 folds into the PDZ domain; sequence DISYQLMENS…HFVSMKKLDE (81 aa).

This sequence belongs to the peptidase S1C family.

The protein resides in the mitochondrion membrane. In terms of biological role, putative serine protease. The polypeptide is Protease Do-like 4, mitochondrial (DEGP4) (Arabidopsis thaliana (Mouse-ear cress)).